Reading from the N-terminus, the 327-residue chain is tRNA uridine(34) hydroxylase (327 aa).

Residues 142–240 form the Rhodanese domain; that stretch reads DDPDTLVIDT…YLEQVPEAES (99 aa). Residue cysteine 200 is the Cysteine persulfide intermediate of the active site.

Belongs to the TrhO family.

It carries out the reaction uridine(34) in tRNA + AH2 + O2 = 5-hydroxyuridine(34) in tRNA + A + H2O. Its function is as follows. Catalyzes oxygen-dependent 5-hydroxyuridine (ho5U) modification at position 34 in tRNAs. This chain is tRNA uridine(34) hydroxylase, found in Synechococcus sp. (strain CC9605).